The following is a 317-amino-acid chain: Pantothenate kinase (317 aa).

99 to 106 (GSVSVGKS) contributes to the ATP binding site.

Belongs to the prokaryotic pantothenate kinase family.

Its subcellular location is the cytoplasm. The catalysed reaction is (R)-pantothenate + ATP = (R)-4'-phosphopantothenate + ADP + H(+). Its pathway is cofactor biosynthesis; coenzyme A biosynthesis; CoA from (R)-pantothenate: step 1/5. This is Pantothenate kinase from Histophilus somni (strain 2336) (Haemophilus somnus).